We begin with the raw amino-acid sequence, 447 residues long: N-succinylarginine dihydrolase (447 aa).

Substrate-binding positions include 19 to 28 (AGLSFGNEAS), N110, and 137 to 138 (HR). The active site involves E174. Substrate is bound at residue R213. Residue H249 is part of the active site. Residues D251 and N364 each contribute to the substrate site. The Nucleophile role is filled by C370.

The protein belongs to the succinylarginine dihydrolase family. Homodimer.

It catalyses the reaction N(2)-succinyl-L-arginine + 2 H2O + 2 H(+) = N(2)-succinyl-L-ornithine + 2 NH4(+) + CO2. It functions in the pathway amino-acid degradation; L-arginine degradation via AST pathway; L-glutamate and succinate from L-arginine: step 2/5. Functionally, catalyzes the hydrolysis of N(2)-succinylarginine into N(2)-succinylornithine, ammonia and CO(2). The chain is N-succinylarginine dihydrolase from Yersinia enterocolitica serotype O:8 / biotype 1B (strain NCTC 13174 / 8081).